Consider the following 209-residue polypeptide: Putative amino acid efflux protein YcgF (209 aa).

Transmembrane regions (helical) follow at residues 1 to 21, 39 to 59, 62 to 82, 110 to 130, 147 to 167, and 184 to 204; these read MNIF…VGPV, IFGL…YFGL, FLTA…VLTY, FASG…WLGI, LLIY…CMAI, and LTGI…YQGI.

This sequence belongs to the Rht family.

The protein resides in the cell membrane. This is Putative amino acid efflux protein YcgF (ycgF) from Bacillus subtilis (strain 168).